Reading from the N-terminus, the 179-residue chain is Large ribosomal subunit protein uL6 (179 aa).

It belongs to the universal ribosomal protein uL6 family. Part of the 50S ribosomal subunit.

Its function is as follows. This protein binds to the 23S rRNA, and is important in its secondary structure. It is located near the subunit interface in the base of the L7/L12 stalk, and near the tRNA binding site of the peptidyltransferase center. The sequence is that of Large ribosomal subunit protein uL6 from Rhodococcus opacus (strain B4).